The chain runs to 312 residues: Small ribosomal subunit protein RACK1 (312 aa).

7 WD repeats span residues 9–42 (GHRGWVTSLACPQQAGSYIKVVSTSRDGTVISWK), 63–93 (GHTGFVSCVSLAHATDYALTASWDRSIRMWD), 105–135 (KHTKDVLAVAFSPDDRLIVSAGRDNVIRVWN), 148–180 (GHEDWVSSICFSPSLEHPIVVSGSWDNTIKVWN), 192–222 (GHSNYVSTVTVSPDGSLCASGGKDGAALLWD), 233–262 (NVESPINQIGFSPNRFWMCVATERSLSVYD), and 279–307 (PSECISIAWSADGNTLYSGHKDNLIRVWS).

It belongs to the WD repeat G protein beta family. Ribosomal protein RACK1 subfamily.

This chain is Small ribosomal subunit protein RACK1, found in Leishmania major.